The primary structure comprises 69 residues: M-poneratoxin-Dq4e (69 aa).

Positions 1–25 are cleaved as a signal peptide; it reads MKLSAFTLAFALILMMAIMYNMAEA. The propeptide occupies 26 to 39; sequence AALADADADAEAIA.

As to expression, expressed by the venom gland.

It is found in the secreted. May have antimicrobial properties, like most ant linear peptides. In addition, when tested in vitro on the parasite Trypanosoma cruzi (responsible of the Chagas disease), is able to moderately reduce the number of the three forms (epimastigote, trypomastigote and amastigote) by inducing cell death through necrosis. In Dinoponera quadriceps (South American ant), this protein is M-poneratoxin-Dq4e.